We begin with the raw amino-acid sequence, 607 residues long: Serum albumin (607 aa).

An N-terminal signal peptide occupies residues 1–16 (MKWTILTALLIISAES). Positions 17–20 (KNLY) are excised as a propeptide. Albumin domains lie at 19–209 (LYKR…TQLK), 210–401 (KALH…HVLA), and 403–600 (AIKE…ILIE). Residue histidine 27 participates in Cu cation binding. Cystine bridges form between cysteine 77-cysteine 86, cysteine 99-cysteine 115, cysteine 114-cysteine 125, cysteine 147-cysteine 192, cysteine 191-cysteine 200, cysteine 223-cysteine 269, cysteine 268-cysteine 276, cysteine 288-cysteine 302, cysteine 301-cysteine 312, cysteine 339-cysteine 384, cysteine 383-cysteine 392, cysteine 415-cysteine 461, cysteine 460-cysteine 471, cysteine 484-cysteine 500, cysteine 499-cysteine 510, cysteine 537-cysteine 582, and cysteine 581-cysteine 590. Zn(2+) contacts are provided by histidine 270 and aspartate 272. Aspartate 272 and glutamate 275 together coordinate Ca(2+).

It belongs to the ALB/AFP/VDB family. As to expression, plasma. In the skin, widely distributed around the membranes of epithelial layer cells and within the stratum spongiosum of the dermis (at protein level).

Its subcellular location is the secreted. In terms of biological role, serum albumin, the main protein of plasma, has a good binding capacity for water, Ca(2+), Na(+), K(+), fatty acids, hormones, bilirubin and drugs. Its main function is the regulation of the colloidal osmotic pressure of blood. Potent inhibitor of trypsin but has no inhibitory effect on thrombin, chymotrypsin, elastase and subtilisin. The protein is Serum albumin of Bombina maxima (Giant fire-bellied toad).